Consider the following 246-residue polypeptide: Hsp70 nucleotide exchange factor fes-1 (246 aa).

Residues 23–40 (QSYHSNGAPTPNNNSGPA) are compositionally biased toward polar residues. Residues 23–63 (QSYHSNGAPTPNNNSGPATGTGAVATSPAPQVTGSGPRPVD) are disordered. ARM repeat units follow at residues 48-92 (TSPA…DPSP), 113-152 (LDNANLLEELSLWSPLISLLDHEDEDMRYHAAWCLGTAVQ), 155-196 (QKTQ…SAVR), and 214-244 (HEVLVNNGTKVDAADMDKVDEVIDVLRNKAK).

It belongs to the FES1 family.

The protein resides in the cytoplasm. Its function is as follows. Functions as a nucleotide exchange factor (NEF) for Hsp70 chaperones which accelerates the release of ADP. Required for fully efficient Hsp70-mediated folding of proteins. The sequence is that of Hsp70 nucleotide exchange factor fes-1 (fes-1) from Neurospora crassa (strain ATCC 24698 / 74-OR23-1A / CBS 708.71 / DSM 1257 / FGSC 987).